The following is a 249-amino-acid chain: 2,3-bisphosphoglycerate-dependent phosphoglycerate mutase (249 aa).

Substrate is bound by residues Arg8–Asn15, Thr21–Gly22, Arg60, Glu87–Tyr90, Lys98, Arg114–Arg115, and Gly183–Asn184. The Tele-phosphohistidine intermediate role is filled by His9. Catalysis depends on Glu87, which acts as the Proton donor/acceptor.

Belongs to the phosphoglycerate mutase family. BPG-dependent PGAM subfamily. As to quaternary structure, homodimer.

The enzyme catalyses (2R)-2-phosphoglycerate = (2R)-3-phosphoglycerate. It functions in the pathway carbohydrate degradation; glycolysis; pyruvate from D-glyceraldehyde 3-phosphate: step 3/5. Catalyzes the interconversion of 2-phosphoglycerate and 3-phosphoglycerate. In Burkholderia mallei (strain NCTC 10247), this protein is 2,3-bisphosphoglycerate-dependent phosphoglycerate mutase.